Here is an 874-residue protein sequence, read N- to C-terminus: Ectonucleotide pyrophosphatase/phosphodiesterase family member 3 (874 aa).

Residues 1–11 (MDSRLALATEE) lie on the Cytoplasmic side of the membrane. A helical; Signal-anchor for type II membrane protein transmembrane segment spans residues 12-30 (PIKKDSLKKYKILCVVLLA). Residues 31–874 (LLVIVSLGLG…TYLPTFETII (844 aa)) lie on the Extracellular side of the membrane. SMB domains lie at 51-93 (QGSC…VKST) and 94-138 (QIWT…GESP). Cystine bridges form between Cys-54–Cys-58, Cys-54–Cys-71, Cys-58–Cys-89, Cys-69–Cys-71, Cys-69–Cys-82, Cys-75–Cys-81, Cys-82–Cys-89, Cys-98–Cys-115, Cys-103–Cys-133, Cys-113–Cys-126, Cys-119–Cys-125, Cys-144–Cys-190, and Cys-152–Cys-364. Positions 78 to 80 (RGD) match the Cell attachment site motif. A phosphodiesterase region spans residues 160–544 (PVILFSMDGF…HGSLNHLLKT (385 aa)). Position 167 (Asp-167) interacts with Zn(2+). Position 204 (Lys-204) interacts with ATP. Thr-205 serves as a coordination point for Zn(2+). The active-site Nucleophile is the Thr-205. Residue Asn-226 coordinates ATP. The N-linked (GlcNAc...) asparagine glycan is linked to Asn-236. Asp-275 contacts ATP. 2 N-linked (GlcNAc...) asparagine glycosylation sites follow: Asn-279 and Asn-288. Residue Tyr-289 participates in ATP binding. Zn(2+)-binding residues include Asp-325, His-329, Asp-372, and His-373. 6 disulfides stabilise this stretch: Cys-380/Cys-477, Cys-428/Cys-817, Cys-561/Cys-623, Cys-574/Cys-679, Cys-576/Cys-664, and Cys-786/Cys-796. N-linked (GlcNAc...) asparagine glycosylation occurs at Asn-425. Residue His-482 coordinates Zn(2+). Residues Asn-532, Asn-594, Asn-687, and Asn-701 are each glycosylated (N-linked (GlcNAc...) asparagine). Positions 581 to 874 (NTPGLEEQAN…TYLPTFETII (294 aa)) are nuclease. Ca(2+) is bound by residues Asp-751, Asn-753, Asp-755, His-757, and Asp-759. Asn-820 carries an N-linked (GlcNAc...) asparagine glycan.

In terms of assembly, monomer and homodimer. Zn(2+) serves as cofactor. N-glycosylated. N-glycosylation is necessary for normal transport to the cell membrane, but is not the apical targeting signal. In terms of tissue distribution, detected at the tip of villi in the small intestine. Detected on basophils and mast cells (at protein level). Detected in the epithelial layer of the small intestine; expression is higher in the proximal part and lower in the distal part of the small intestine.

The protein localises to the cell membrane. It is found in the apical cell membrane. The protein resides in the secreted. The catalysed reaction is a ribonucleoside 5'-triphosphate + H2O = a ribonucleoside 5'-phosphate + diphosphate + H(+). It carries out the reaction UDP-N-acetyl-alpha-D-glucosamine + H2O = N-acetyl-alpha-D-glucosamine 1-phosphate + UMP + 2 H(+). It catalyses the reaction ATP + H2O = AMP + diphosphate + H(+). The enzyme catalyses CTP + H2O = CMP + diphosphate + H(+). The catalysed reaction is GTP + H2O = GMP + diphosphate + H(+). It carries out the reaction UTP + H2O = UMP + diphosphate + H(+). It catalyses the reaction Hydrolytically removes 5'-nucleotides successively from the 3'-hydroxy termini of 3'-hydroxy-terminated oligonucleotides.. The enzyme catalyses P(1),P(3)-bis(5'-adenosyl) triphosphate + H2O = AMP + ADP + 2 H(+). The catalysed reaction is P(1),P(4)-bis(5'-adenosyl) tetraphosphate + H2O = AMP + ATP + 2 H(+). It carries out the reaction P(1),P(5)-bis(5'-adenosyl) pentaphosphate + H2O = adenosine 5'-tetraphosphate + AMP + 2 H(+). It catalyses the reaction P(1),P(4)-bis(5'-guanosyl) tetraphosphate + H2O = GMP + GTP + 2 H(+). Functionally, hydrolase that metabolizes extracellular nucleotides, including ATP, GTP, UTP and CTP. Limits mast cells and basophils response during inflammation and during the chronic phases of allergic responses by eliminating extracellular ATP, a signaling molecule activating these cells in an autocrine manner. Metabolizes extracellular ATP in the lumen of the small intestine, and thereby prevents ATP-induced apoptosis of intestinal plasmacytoid dendritic cells. Has a broad specificity and can also hydrolyze UDP-GlcNAc into UMP and GlcNAc-1-phosphate and potentially several other intracellular nucleotide sugars, including UDP-GalNAc, CMP-NeuAc, GDP-Fuc, and UDP-GlcA. Thereby, could modulate glycan biosynthesis and protein glycosylation. Can hydrolyze extracellular dinucleoside polyphosphates, including the vasoactive adenosine polyphosphates as well. In addition, displays an alkaline phosphodiesterase activity in vitro. This chain is Ectonucleotide pyrophosphatase/phosphodiesterase family member 3, found in Mus musculus (Mouse).